Reading from the N-terminus, the 131-residue chain is UPF0102 protein YraN (131 aa).

A compositionally biased stretch (polar residues) spans 1 to 19 (MATVPTRSGSPRQLTTKQT). Residues 1-21 (MATVPTRSGSPRQLTTKQTGD) form a disordered region.

It belongs to the UPF0102 family.

The sequence is that of UPF0102 protein YraN from Escherichia coli (strain K12 / MC4100 / BW2952).